A 513-amino-acid polypeptide reads, in one-letter code: Bifunctional purine biosynthesis protein PurH (513 aa).

In terms of domain architecture, MGS-like spans 1 to 145; sequence MTKRALISVS…KNYQDVTAVV (145 aa).

Belongs to the PurH family.

It carries out the reaction (6R)-10-formyltetrahydrofolate + 5-amino-1-(5-phospho-beta-D-ribosyl)imidazole-4-carboxamide = 5-formamido-1-(5-phospho-D-ribosyl)imidazole-4-carboxamide + (6S)-5,6,7,8-tetrahydrofolate. The catalysed reaction is IMP + H2O = 5-formamido-1-(5-phospho-D-ribosyl)imidazole-4-carboxamide. It functions in the pathway purine metabolism; IMP biosynthesis via de novo pathway; 5-formamido-1-(5-phospho-D-ribosyl)imidazole-4-carboxamide from 5-amino-1-(5-phospho-D-ribosyl)imidazole-4-carboxamide (10-formyl THF route): step 1/1. It participates in purine metabolism; IMP biosynthesis via de novo pathway; IMP from 5-formamido-1-(5-phospho-D-ribosyl)imidazole-4-carboxamide: step 1/1. The polypeptide is Bifunctional purine biosynthesis protein PurH (Enterococcus faecalis (strain ATCC 700802 / V583)).